The following is a 417-amino-acid chain: Serine hydroxymethyltransferase (417 aa).

(6S)-5,6,7,8-tetrahydrofolate is bound by residues L112 and 116-118; that span reads GHL. K221 is subject to N6-(pyridoxal phosphate)lysine. Position 247 (E247) interacts with (6S)-5,6,7,8-tetrahydrofolate.

This sequence belongs to the SHMT family. In terms of assembly, homodimer. It depends on pyridoxal 5'-phosphate as a cofactor.

The protein resides in the cytoplasm. It catalyses the reaction (6R)-5,10-methylene-5,6,7,8-tetrahydrofolate + glycine + H2O = (6S)-5,6,7,8-tetrahydrofolate + L-serine. It participates in one-carbon metabolism; tetrahydrofolate interconversion. The protein operates within amino-acid biosynthesis; glycine biosynthesis; glycine from L-serine: step 1/1. Catalyzes the reversible interconversion of serine and glycine with tetrahydrofolate (THF) serving as the one-carbon carrier. This reaction serves as the major source of one-carbon groups required for the biosynthesis of purines, thymidylate, methionine, and other important biomolecules. Also exhibits THF-independent aldolase activity toward beta-hydroxyamino acids, producing glycine and aldehydes, via a retro-aldol mechanism. The protein is Serine hydroxymethyltransferase of Borrelia hermsii (strain HS1 / DAH).